Consider the following 340-residue polypeptide: Diacylglycerol acyltransferase/mycolyltransferase Ag85C (340 aa).

Residues 1–45 (MTFFEQVRRLRSAATTLPRRLAIAAMGAVLVYGLVGTFGGPATAG) form the signal peptide. Residue 86–87 (LR) participates in substrate binding. The segment at 102–112 (FEEYYQSGLSV) is fibronectin-binding. Ser170 and Asn198 together coordinate substrate. Ser170 (nucleophile) is an active-site residue. The active site involves Glu274. Substrate-binding positions include 276–279 (LTLR) and 306–308 (HSW). His306 is a catalytic residue.

Belongs to the mycobacterial A85 antigen family. As to quaternary structure, homodimer.

It is found in the secreted. It carries out the reaction an acyl-CoA + a 1,2-diacyl-sn-glycerol = a triacyl-sn-glycerol + CoA. It catalyses the reaction 2 alpha,alpha'-trehalose 6-mycolate = alpha,alpha'-trehalose 6,6'-bismycolate + alpha,alpha-trehalose. The antigen 85 proteins (FbpA, FbpB, FbpC) are responsible for the high affinity of mycobacteria to fibronectin, a large adhesive glycoprotein, which facilitates the attachment of M.tuberculosis to murine alveolar macrophages (AMs). They also help to maintain the integrity of the cell wall by catalyzing the transfer of mycolic acids to cell wall arabinogalactan and through the synthesis of alpha,alpha-trehalose dimycolate (TDM, cord factor). They catalyze the transfer of a mycoloyl residue from one molecule of alpha,alpha-trehalose monomycolate (TMM) to another TMM, leading to the formation of TDM. This chain is Diacylglycerol acyltransferase/mycolyltransferase Ag85C (fbpC), found in Mycobacterium bovis (strain ATCC BAA-935 / AF2122/97).